The primary structure comprises 1033 residues: MLRLWRYLCLLLTVWFLCNFGPVYVVRAQNRTGATTHPDEALALNSIFAAWRIRAPREWNISGELCSGAAIDASVLDSNPAYNPLIKCDCSFENSTICRITNIKVYAMEVVGSIPQQLWTLEYLTNLNLGQNVLTGSLPPALGNLTRMRWMTFGINALSGPIPKEIGLLTDLRLLSISSNNFSGSIPDEIGRCTKLQQIYIDSSGLSGGLPVSFANLVELEQAWIADMELTGQIPDFIGDWTKLTTLRILGTGLSGPIPASFSNLTSLTELRLGDISNGNSSLEFIKDMKSLSILVLRNNNLTGTIPSNIGEYSSLRQLDLSFNKLHGTIPASLFNLRQLTHLFLGNNTLNGSLPTQKGQSLSNVDVSYNDLSGSLPSWVSLPNLNLNLVANNFTLEGLDNRVLSGLNCLQKNFPCNRGKGIYSDFSINCGGPEIRSVTEAVFEREDEDLGPASFVVSAGQRWAASSVGLFAGSSNNIYISTSQSQFVNTLDSELFQSARLSASSLRYYGLGLENGGYTVTLQFAEIQILGSTSNTWRGLGRRRFDIYVQGRLVEKDFDVRRTAGDSTVRAVQREYKANVSQNHLEIHLFWAGKGTCCIPIQGAYGPLISAVGATPDFTPTVGNRPPSKGKSMTGTIVGVIVGVGLLSIISGVVIFIIRKRRKRYTDDEEILSMDVKPYTFTYSELKSATQDFDPSNKLGEGGFGPVYKGKLNDGREVAVKLLSVGSRQGKGQFVAEIVAISAVQHRNLVKLYGCCYEGEHRLLVYEYLPNGSLDQALFGEKTLHLDWSTRYEICLGVARGLVYLHEEARLRIVHRDVKASNILLDSKLVPKVSDFGLAKLYDDKKTHISTRVAGTIGYLAPEYAMRGHLTEKTDVYAFGVVALELVSGRPNSDENLEDEKRYLLEWAWNLHEKGREVELIDHQLTEFNMEEGKRMIGIALLCTQTSHALRPPMSRVVAMLSGDVEVSDVTSKPGYLTDWRFDDTTASSISGFPLRNTQASESFTSFVAPRSEISPRNNDARPMLGAQMNEGR.

The first 28 residues, 1–28 (MLRLWRYLCLLLTVWFLCNFGPVYVVRA), serve as a signal peptide directing secretion. Over 29–636 (QNRTGATTHP…PSKGKSMTGT (608 aa)) the chain is Extracellular. N-linked (GlcNAc...) asparagine glycans are attached at residues Asn-30, Asn-60, and Asn-94. LRR repeat units lie at residues 97-121 (ICRI…LWTL), 122-145 (EYLT…LGNL), 147-169 (RMRW…IGLL), 170-193 (TDLR…IGRC), 195-217 (KLQQ…FANL), 241-264 (WTKL…SFSN), 265-288 (LTSL…FIKD), 289-313 (MKSL…IGEY), 314-337 (SSLR…LFNL), 339-361 (QLTH…KGQS), 363-382 (SNVD…WVSL), 383-406 (PNLN…VLSG), and 422-445 (IYSD…VFER). N-linked (GlcNAc...) asparagine glycosylation occurs at Asn-144. An N-linked (GlcNAc...) asparagine glycan is attached at Asn-181. N-linked (GlcNAc...) asparagine glycans are attached at residues Asn-264, Asn-280, and Asn-301. Residues Asn-347 and Asn-351 are each glycosylated (N-linked (GlcNAc...) asparagine). Asn-393 carries N-linked (GlcNAc...) asparagine glycosylation. N-linked (GlcNAc...) asparagine glycosylation is present at Asn-579. Residues 637-657 (IVGVIVGVGLLSIISGVVIFI) traverse the membrane as a helical segment. At 658 to 1033 (IRKRRKRYTD…MLGAQMNEGR (376 aa)) the chain is on the cytoplasmic side. A Phosphothreonine modification is found at Thr-682. The 259-residue stretch at 693 to 951 (FDPSNKLGEG…LCTQTSHALR (259 aa)) folds into the Protein kinase domain. Residues 699-707 (LGEGGFGPV) and Lys-721 contribute to the ATP site. The residue at position 766 (Tyr-766) is a Phosphotyrosine. The Proton acceptor role is filled by Asp-817. Phosphoserine occurs at positions 821 and 850. 2 positions are modified to phosphothreonine: Thr-851 and Thr-856. Tyr-864 is subject to Phosphotyrosine. Positions 1012–1033 (SEISPRNNDARPMLGAQMNEGR) are disordered.

Belongs to the protein kinase superfamily. Ser/Thr protein kinase family.

Its subcellular location is the membrane. The enzyme catalyses L-seryl-[protein] + ATP = O-phospho-L-seryl-[protein] + ADP + H(+). It carries out the reaction L-threonyl-[protein] + ATP = O-phospho-L-threonyl-[protein] + ADP + H(+). This Arabidopsis thaliana (Mouse-ear cress) protein is Probable LRR receptor-like serine/threonine-protein kinase At1g56140.